A 458-amino-acid chain; its full sequence is Argininosuccinate lyase (458 aa).

It belongs to the lyase 1 family. Argininosuccinate lyase subfamily.

The protein localises to the cytoplasm. It catalyses the reaction 2-(N(omega)-L-arginino)succinate = fumarate + L-arginine. It participates in amino-acid biosynthesis; L-arginine biosynthesis; L-arginine from L-ornithine and carbamoyl phosphate: step 3/3. In Actinobacillus pleuropneumoniae serotype 3 (strain JL03), this protein is Argininosuccinate lyase.